The chain runs to 168 residues: Pleiotrophin (168 aa).

Positions 1–32 (MQTPQFLQQRRKFAAAFLAFIFLLAVVDTAEA) are cleaved as a signal peptide. 5 cysteine pairs are disulfide-bonded: C47–C76, C55–C85, C62–C89, C99–C131, and C109–C141. 2 chondroitin sulfate binding regions span residues 92-99 (KKQFGAEC) and 123-131 (KRALHNADC). A disordered region spans residues 139 to 168 (KPCGKVTKPKPQAESKKKKKEGKKQEKMLD). The tract at residues 147 to 168 (PKPQAESKKKKKEGKKQEKMLD) is chondroitin sulfate A binding.

Belongs to the pleiotrophin family. Interacts with ALK and NEK6. Interacts with PTPRZ1 (via chondroitin sulfate groups); promotes formation of homooligomers; oligomerization impairs tyrosine phosphatase activity. Forms a complex with PTPRZ1 and CTNNB1; this complex inactivates PTPRZ1 protein tyrosine phosphatase activity through PTN interaction and stimulates tyrosine phosphorylation of CTNNB1. Interacts with ITGB3 and ITGA5. Forms a complex with PTPRZ1 and integrin alpha-V/beta-3 (ITGAV:ITGB3) that stimulates endothelial cell migration through ITGB3 'Tyr-773' phosphorylation. Interacts with SDC3 (via heparan sulfate chains); this interaction mediates the neurite outgrowth-promoting signal from PTN to the cytoskeleton of growing neurites; this interaction mediates osteoblast recruitment. Interacts with GPC2 (via heparan sulfate); this interaction promotes neurite outgrowth through binding of PTN with chondroitin sulfate of proteoglycans, thereby releasing PTPRS of chondroitin sulfate proteoglycans (CSPGs) and leading to binding with heparan sulfate of GPC2. Phosphorylated by NEK6.

Its subcellular location is the secreted. In terms of biological role, secreted growth factor that mediates its signal through cell-surface proteoglycan and non-proteoglycan receptors. Binds cell-surface proteoglycan receptor via their chondroitin sulfate (CS) groups. Thereby regulates many processes like cell proliferation, cell survival, cell growth, cell differentiation and cell migration in several tissues namely neuron and bone. Also plays a role in synaptic plasticity and learning-related behavior by inhibiting long-term synaptic potentiation. Binds PTPRZ1, leading to neutralization of the negative charges of the CS chains of PTPRZ1, inducing PTPRZ1 clustering, thereby causing the dimerization and inactivation of its phosphatase activity leading to increased tyrosine phosphorylation of each of the PTPRZ1 substrates like ALK, CTNNB1 or AFAP1L2 in order to activate the PI3K-AKT pathway. Through PTPRZ1 binding controls oligodendrocyte precursor cell differentiation by enhancing the phosphorylation of AFAP1L2 in order to activate the PI3K-AKT pathway. Forms a complex with PTPRZ1 and integrin alpha-V/beta-3 (ITGAV:ITGB3) that stimulates endothelial cell migration through SRC dephosphorylation and activation that consequently leads to ITGB3 'Tyr-773' phosphorylation. In adult hippocampus promotes dendritic arborization, spine development, and functional integration and connectivity of newborn granule neurons through ALK by activating AKT signaling pathway. Binds GPC2 and chondroitin sulfate proteoglycans (CSPGs) at the neuron surface, leading to abrogation of binding between PTPRS and CSPGs and neurite outgrowth promotion. Binds SDC3 and mediates bone formation by recruiting and attaching osteoblasts/osteoblast precursors to the sites for new bone deposition. Binds ALK and promotes cell survival and cell proliferation through MAPK pathway activation. Inhibits proliferation and enhances differentiation of neural stem cells by inhibiting FGF2-induced fibroblast growth factor receptor signaling pathway. Mediates regulatory mechanisms in normal hemostasis and in hematopoietic regeneration and in maintaining the balance of myeloid and lymphoid regeneration. In addition may play a role in the female reproductive system, auditory response and the progesterone-induced decidualization pathway. The protein is Pleiotrophin of Sus scrofa (Pig).